A 400-amino-acid chain; its full sequence is Probable RNA polymerase sigma factor RfaY (400 aa).

Positions 62–75 (WQRLAQLHQPASFL) match the Polymerase core binding motif. The segment at residues 165–184 (SDAAVRKRLSRARATVRNEL) is a DNA-binding region (H-T-H motif).

It belongs to the sigma-70 factor family. ECF subfamily.

Sigma factors are initiation factors that promote the attachment of RNA polymerase to specific initiation sites and are then released. This sigma factor is involved in lipopolysaccharide biosynthesis and pathogenicity. The chain is Probable RNA polymerase sigma factor RfaY (rfaY) from Xanthomonas campestris pv. campestris (strain ATCC 33913 / DSM 3586 / NCPPB 528 / LMG 568 / P 25).